Reading from the N-terminus, the 85-residue chain is MSIFPIILALLLIGLDEGEALDGYPLSKNNYCKIYCPDEKVCKWSCKHRAGATNGKGDCINKGCYCYDVAPGTEMYPGRLPCNPY.

An N-terminal signal peptide occupies residues 1 to 20; the sequence is MSIFPIILALLLIGLDEGEA. In terms of domain architecture, LCN-type CS-alpha/beta spans 21-83; it reads LDGYPLSKNN…EMYPGRLPCN (63 aa). 4 disulfides stabilise this stretch: cysteine 32–cysteine 82, cysteine 36–cysteine 59, cysteine 42–cysteine 64, and cysteine 46–cysteine 66.

In terms of tissue distribution, expressed by the venom gland.

Its subcellular location is the secreted. Its function is as follows. Beta toxins bind voltage-independently at site-4 of sodium channels (Nav) and shift the voltage of activation toward more negative potentials thereby affecting sodium channel activation and promoting spontaneous and repetitive firing. The chain is Toxin To6 from Tityus obscurus (Amazonian scorpion).